Reading from the N-terminus, the 230-residue chain is NAD(P)H-hydrate epimerase (230 aa).

The YjeF N-terminal domain maps to 11–218; the sequence is AIAVDQELFN…ALQRKYELNL (208 aa). A (6S)-NADPHX-binding site is contributed by 61 to 65; it reads NNGGD. Residues Asn62 and Asp126 each contribute to the K(+) site. (6S)-NADPHX-binding positions include 130–136 and Asp159; that span reads GFSFKPP. Ser162 provides a ligand contact to K(+).

It belongs to the NnrE/AIBP family. Requires K(+) as cofactor.

It carries out the reaction (6R)-NADHX = (6S)-NADHX. The catalysed reaction is (6R)-NADPHX = (6S)-NADPHX. In terms of biological role, catalyzes the epimerization of the S- and R-forms of NAD(P)HX, a damaged form of NAD(P)H that is a result of enzymatic or heat-dependent hydration. This is a prerequisite for the S-specific NAD(P)H-hydrate dehydratase to allow the repair of both epimers of NAD(P)HX. This is NAD(P)H-hydrate epimerase from Drosophila sechellia (Fruit fly).